The sequence spans 138 residues: MQGGGGVSCAVAGDAPSSTRGGGGGGMLGLTLFDPPGGEQPAERIGRLVRESPVVIFARRGCCMCHVMRRLLAAVGAHATVIELDEAAEEAAASAAAAAAVPALFVGGAPVGGLDGLMGLHLSGRLVPRLREVGALCG.

Residues 17–40 (SSTRGGGGGGMLGLTLFDPPGGEQ) are disordered. The Glutaredoxin domain maps to 42–137 (AERIGRLVRE…PRLREVGALC (96 aa)). A disulfide bridge links Cys-62 with Cys-65.

Belongs to the glutaredoxin family. CC-type subfamily.

It is found in the cytoplasm. Has a glutathione-disulfide oxidoreductase activity in the presence of NADPH and glutathione reductase. Reduces low molecular weight disulfides and proteins. The chain is Glutaredoxin-C7 (GRXC7) from Oryza sativa subsp. japonica (Rice).